Here is a 157-residue protein sequence, read N- to C-terminus: Transcriptional repressor NrdR (157 aa).

The segment at 3 to 34 (CPFCGHMESQVKDSRPSEDGAAIRRRRLCPEC) is a zinc-finger region. The ATP-cone domain occupies 49 to 139 (LTIVKRSGRR…VYRDFRETSD (91 aa)).

This sequence belongs to the NrdR family. It depends on Zn(2+) as a cofactor.

Functionally, negatively regulates transcription of bacterial ribonucleotide reductase nrd genes and operons by binding to NrdR-boxes. This is Transcriptional repressor NrdR from Caulobacter sp. (strain K31).